The primary structure comprises 85 residues: RDS3 complex subunit 10 (85 aa).

In terms of assembly, belongs to the SF3b complex composed of CUS1, HSH49, HSH155, RCP1, RDS3 and RSE1.

The protein resides in the nucleus. Involved in pre-mRNA splicing. Required for the SF3b integrity and prespliceosome assembly. This chain is RDS3 complex subunit 10 (YSF3), found in Saccharomyces cerevisiae (strain ATCC 204508 / S288c) (Baker's yeast).